Consider the following 277-residue polypeptide: Probable ABC transporter permease protein y4oR (277 aa).

A run of 7 helical transmembrane segments spans residues 15-35, 79-99, 109-129, 140-160, 189-209, 213-233, and 242-262; these read LWTLFWCVLAFVYLFPYTWMV, VVTIVSVVLVIAVSAPAAYAL, LLVAILVARIIPGIAIGVPVY, TYQALIIINVAVNIPFAIWLM, IMMPLVLGGMLATAVFVFIAV, FLFALILTTSVSPTAPLAMLG, and WDAVGAAAFLVSTPVIAFAFI. In terms of domain architecture, ABC transmembrane type-1 spans 74 to 263; it reads IINSAVVTIV…TPVIAFAFIM (190 aa).

It belongs to the binding-protein-dependent transport system permease family. MalFG subfamily.

Its subcellular location is the cell inner membrane. In terms of biological role, probably part of the binding-protein-dependent transport system y4oPQRS. This system probably transports a sugar-like molecule. Probably responsible for the translocation of the substrate across the membrane. The polypeptide is Probable ABC transporter permease protein y4oR (Sinorhizobium fredii (strain NBRC 101917 / NGR234)).